We begin with the raw amino-acid sequence, 347 residues long: FMRFamide-related peptides (347 aa).

Residues 1 to 22 (MGIALMFLLALYQMQSAIHSEI) form the signal peptide. A propeptide spanning residues 23–102 (IDTPNYAGNS…RYKYDPELEA (80 aa)) is cleaved from the precursor. Phe114 carries the post-translational modification Phenylalanine amide. Tyr146 bears the Tyrosine amide mark. A phenylalanine amide mark is found at Phe157, Phe168, Phe179, Phe190, Phe201, Phe212, Phe223, and Phe232. Residues 235–240 (SPHEEL) constitute a propeptide that is removed on maturation. 2 positions are modified to phenylalanine amide: Phe250 and Phe259. Ser270 is subject to Serine amide. A Phenylalanine amide modification is found at Phe280. A propeptide spanning residues 283-347 (SLKPAAPESK…SVEQDQFFGQ (65 aa)) is cleaved from the precursor. The tract at residues 283 to 347 (SLKPAAPESK…SVEQDQFFGQ (65 aa)) is disordered. Residues 305-320 (SPVDKAMTELFKKQEL) show a composition bias toward basic and acidic residues. A compositionally biased stretch (polar residues) spans 321–347 (QDQQVKNGAQATTTQDGSVEQDQFFGQ).

Belongs to the FARP (FMRFamide related peptide) family. In terms of processing, this precursor includes 13 peptides that have FMRF or related sequences at their C-termini, and other putative neuropeptides.

It is found in the secreted. Its function is as follows. In insects, FMRFamide and related peptides have modulatory actions at skeletal neuromuscular junctions, and peptides that are immunologically related to FMRFamide are released into the circulation from neurohemal organs. The chain is FMRFamide-related peptides from Drosophila melanogaster (Fruit fly).